The chain runs to 352 residues: Putative hetero-Diels-Alderase (352 aa).

The N-terminal stretch at 1–20 (MRYHLSALVLVFTAFRETLT) is a signal peptide. 6 N-linked (GlcNAc...) asparagine glycosylation sites follow: Asn-26, Asn-41, Asn-47, Asn-135, Asn-211, and Asn-310.

Belongs to the eupF Diels-Alderase family.

It participates in secondary metabolite biosynthesis; terpenoid biosynthesis. Its function is as follows. Putative hetero-Diels-Alderase; part of the gene cluster that mediates the biosynthesis of eupenifeldin, a bistropolone meroterpenoid that acts as an antitumor agent. The first step of eupenifeldin biosynthesis is the biosynthesis of 3-methylorcinaldehyde performed by the non-reducing polyketide synthase eupA. Oxidative dearomatization of 3-methylorcinaldehyde likely catalyzed by the FAD-dependent monooxygenase eupB is followed by oxidative ring expansion by the 2-oxoglutarate-dependent dioxygenase eupC to provide the first tropolone metabolite, tropolone stipitaldehyde. In parallel, generation of sesquiterpene alpha-humulene from farnesylpyrophosphate (FPP) is catalyzed by the terpene cyclase eupE. The cytochrome P450 monooxygenase eupD then hydroxylates humulene to humulenol. The putative Diels-Alderase eupF probably catalyzes the formation of the tropolone-humulene skeleton by linking humulenol and the polyketide moiety. The short-chain dehydrogenase/reductase eupG and the flavin-dependent monooxygenase eupH are also essential for eupenifeldin biosynthesis and are likely the additional decorating enzymes of the tropolone-humulene skeleton to produce final eupenifeldin or derivatives. The polypeptide is Putative hetero-Diels-Alderase (Phoma sp).